Consider the following 776-residue polypeptide: Transcription activator of gluconeogenesis HCAG_03671 (776 aa).

Residues 1–70 (MTASTQNGSP…NAKDPLRPRR (70 aa)) are disordered. Composition is skewed to polar residues over residues 21–41 (NQES…QSPA) and 50–60 (ENGQKHTSTAA). Positions 77–105 (CFACQRAHLTCGDERPCQRCIKRGLQDAC) form a DNA-binding region, zn(2)-C6 fungal-type. Disordered stretches follow at residues 140-159 (RTNA…KDSR), 179-248 (TQAK…PFGA), 286-351 (GAGD…NIYN), 556-593 (NLNV…GGGG), and 651-726 (REAQ…SPKQ). Residues 142 to 155 (NASQQQNGPNSNSN) are compositionally biased toward low complexity. Polar residues predominate over residues 195 to 217 (MQDTSINPSAFQAPSPTSTPNFD). Over residues 218-229 (LSSNPPNRNLSS) the composition is skewed to low complexity. Polar residues-rich tracts occupy residues 230–244 (AMTQ…QTQD), 292–322 (PSDS…NTQP), 334–351 (WNPS…NIYN), and 557–576 (LNVN…TPRN). The span at 657 to 669 (GPDGKGGGGGGGD) shows a compositional bias: gly residues. A compositionally biased stretch (low complexity) spans 670 to 714 (VATTAATTSTSTSNGANSSGHANANRNNTNPNNSSPPSSSSAAAA).

It belongs to the ERT1/acuK family.

It localises to the nucleus. Its function is as follows. Transcription factor which regulates nonfermentable carbon utilization. Activator of gluconeogenetic genes. The protein is Transcription activator of gluconeogenesis HCAG_03671 of Ajellomyces capsulatus (strain NAm1 / WU24) (Darling's disease fungus).